Consider the following 338-residue polypeptide: Glycerol-3-phosphate dehydrogenase [NAD(P)+] (338 aa).

Ser-14, Tyr-15, His-35, and Lys-109 together coordinate NADPH. Lys-109, Gly-138, and Thr-140 together coordinate sn-glycerol 3-phosphate. Ala-142 serves as a coordination point for NADPH. Residues Lys-194, Asp-247, Ser-257, Arg-258, and Asn-259 each contribute to the sn-glycerol 3-phosphate site. Lys-194 (proton acceptor) is an active-site residue. Residue Arg-258 coordinates NADPH. Val-282 and Glu-284 together coordinate NADPH.

The protein belongs to the NAD-dependent glycerol-3-phosphate dehydrogenase family.

It localises to the cytoplasm. The enzyme catalyses sn-glycerol 3-phosphate + NAD(+) = dihydroxyacetone phosphate + NADH + H(+). The catalysed reaction is sn-glycerol 3-phosphate + NADP(+) = dihydroxyacetone phosphate + NADPH + H(+). The protein operates within membrane lipid metabolism; glycerophospholipid metabolism. In terms of biological role, catalyzes the reduction of the glycolytic intermediate dihydroxyacetone phosphate (DHAP) to sn-glycerol 3-phosphate (G3P), the key precursor for phospholipid synthesis. The protein is Glycerol-3-phosphate dehydrogenase [NAD(P)+] of Shewanella baltica (strain OS185).